Here is a 564-residue protein sequence, read N- to C-terminus: Probable diguanylate cyclase DgcQ (564 aa).

Transmembrane regions (helical) follow at residues 20 to 40 (LGPGHVVNLCFIVVLLFSTLL) and 360 to 380 (IALTLLWALFTTMLLISWYVI). The region spanning 428-563 (HPFSVIQVDL…GRNRVFASDN (136 aa)) is the GGDEF domain. Residue Asp-436 coordinates Mg(2+). 3 residues coordinate substrate: Asn-444, His-449, and Asp-453. Glu-479 lines the Mg(2+) pocket. The active-site Proton acceptor is Glu-479.

As to quaternary structure, homodimer. Mg(2+) is required as a cofactor.

Its subcellular location is the cell inner membrane. The enzyme catalyses 2 GTP = 3',3'-c-di-GMP + 2 diphosphate. It participates in glycan metabolism; bacterial cellulose biosynthesis. It functions in the pathway purine metabolism; 3',5'-cyclic di-GMP biosynthesis. Functionally, catalyzes the synthesis of cyclic-di-GMP (c-di-GMP) via the condensation of 2 GTP molecules. Cyclic-di-GMP is a second messenger which controls cell surface-associated traits in bacteria. Involved in the regulation of cellulose production. The protein is Probable diguanylate cyclase DgcQ of Escherichia coli (strain K12).